A 508-amino-acid chain; its full sequence is Aspartic proteinase A3 (508 aa).

The signal sequence occupies residues Met1 to Cys25. A propeptide spans Glu26–Leu69 (activation peptide). The 419-residue stretch at Tyr87–Ala505 folds into the Peptidase A1 domain. Asp105 is an active-site residue. Cystine bridges form between Cys118–Cys124 and Cys283–Cys287. Asp292 is a catalytic residue. Positions Ile317 to Gln419 constitute a Saposin B-type domain. 4 disulfide bridges follow: Cys322/Cys413, Cys347/Cys385, Cys353/Cys382, and Cys427/Cys464. A glycan (N-linked (GlcNAc...) asparagine) is linked at Asn399.

The protein belongs to the peptidase A1 family. As to expression, expressed in petals, carpels and seed pods.

Its subcellular location is the secreted. In terms of biological role, involved in the processing and degradation of storage proteins. This chain is Aspartic proteinase A3 (APA3), found in Arabidopsis thaliana (Mouse-ear cress).